A 134-amino-acid chain; its full sequence is Cytochrome c-type biogenesis protein CcmE (134 aa).

The Cytoplasmic portion of the chain corresponds to 1–7; sequence MKRKYRR. A helical; Signal-anchor for type II membrane protein membrane pass occupies residues 8–28; the sequence is LFVVIITLSIFAGSVVFVLGK. Over 29-134 the chain is Periplasmic; that stretch reads LKNNVSFFYT…MPNKYKTNNL (106 aa). Residues His120 and Tyr124 each contribute to the heme site.

It belongs to the CcmE/CycJ family.

It is found in the cell inner membrane. Heme chaperone required for the biogenesis of c-type cytochromes. Transiently binds heme delivered by CcmC and transfers the heme to apo-cytochromes in a process facilitated by CcmF and CcmH. This is Cytochrome c-type biogenesis protein CcmE from Ehrlichia ruminantium (strain Gardel).